Here is a 1004-residue protein sequence, read N- to C-terminus: Protein phosphatase 1 regulatory subunit 12A (1004 aa).

An important for interaction with PPP1CB region spans residues 35-38 (KVKF). 6 ANK repeats span residues 39–68 (DDGAVFLAACSSGDTEEVLRLLERGADINY), 72–101 (DGLTALHQACIDDNVDMVKFLVENGANINQ), 105–134 (EGWIPLHAAASCGYLDIAEYLISQGAHVGA), 138–164 (EGDTPLDIAEEEAMEELLQNEVNRQGV), 198–227 (SGGTALHVAAAKGYTEVLKLLIQARYDVNI), and 231–260 (DGWTPLHAAAHWGKEEACRILVENLCDMEA). A compositionally biased stretch (basic and acidic residues) spans 291–300 (HSEKREKKSP). The interval 291-920 (HSEKREKKSP…SYLEDRKPYC (630 aa)) is disordered. Over residues 302–316 (IESTANLDNNQTQKT) the composition is skewed to polar residues. Basic and acidic residues-rich tracts occupy residues 318–329 (KNKETLIMEQEK) and 336–353 (SLEHEKADEEEEGKKDES). The segment covering 357–369 (SEEEEDDDSESEA) has biased composition (acidic residues). Residues 378–392 (ANANTTSTQSASMTA) are compositionally biased toward polar residues. Basic and acidic residues predominate over residues 417–427 (SPKEEERKDES). Residues 464–475 (RSASSPRLSSSL) show a composition bias toward low complexity. Basic and acidic residues predominate over residues 476–486 (DNKEKEKDGKG). Low complexity predominate over residues 514-525 (SSASSIRSGSSY). Over residues 528-538 (RKWEEDVKKNS) the composition is skewed to basic and acidic residues. Residues 539–554 (LNEGPTSLNTSYQRSG) are compositionally biased toward polar residues. Composition is skewed to low complexity over residues 564-578 (VSSNVPSTASTVTSS) and 587-602 (ASANTTTKSTTGSTSA). A compositionally biased stretch (basic and acidic residues) spans 613–624 (WAEDSTEKEKDS). Over residues 625–659 (VPTAVTVPVAPSVVNAAATTTAMTTATSGTVSSTS) the composition is skewed to low complexity. Positions 672–681 (VRDEESESQR) are enriched in basic and acidic residues. The segment covering 682–692 (KARSRQARQSR) has biased composition (basic residues). Residue threonine 695 is modified to Phosphothreonine; by ROCK2. The segment covering 717–765 (RTREQENEEKEKEEKEKQDKEKQEEKKESETKDDDYRQRYSRTVEEPYH) has biased composition (basic and acidic residues). Low complexity predominate over residues 770–793 (TSTSTSTSSTSSLSTSTSSLSSSS). Residues 794–808 (QLNRPNSLIGITSAY) show a composition bias toward polar residues. Basic and acidic residues predominate over residues 812 to 837 (GTKESEREGGKKEEEKEEDKSQPKSI). The span at 838–849 (RERRRPREKRRS) shows a compositional bias: basic residues. At threonine 850 the chain carries Phosphothreonine; by ROCK2. Over residues 864–880 (QEHQSDSEEGTNKKETQ) the composition is skewed to basic and acidic residues. Polar residues predominate over residues 881–896 (SDSLSRYDTGSLSVSS).

In terms of assembly, PP1 comprises a catalytic subunit, PPP1CA, PPP1CB or PPP1CC, and one or several targeting or regulatory subunits. PPP1R12A mediates binding to myosin. In terms of processing, phosphorylated by CIT (Rho-associated kinase) and by ROCK2 on serine and threonine residues. Phosphorylation at Thr-695 leads to inhibition of myosin phosphatase activity. Phosphorylation at Thr-850 abolishes myosin binding. May be phosphorylated at Thr-695 by DMPK; may inhibit the myosin phosphatase activity. Detected in brain, lung, aorta, heart, gizzard, stomach, oviduct, spleen, kidney and small intestine.

It is found in the cytoplasm. The protein localises to the cytoskeleton. Its subcellular location is the stress fiber. Functionally, regulates myosin phosphatase activity. The polypeptide is Protein phosphatase 1 regulatory subunit 12A (PPP1R12A) (Gallus gallus (Chicken)).